The following is a 100-amino-acid chain: Urease subunit gamma (100 aa).

Belongs to the urease gamma subunit family. As to quaternary structure, heterotrimer of UreA (gamma), UreB (beta) and UreC (alpha) subunits. Three heterotrimers associate to form the active enzyme.

The protein resides in the cytoplasm. It catalyses the reaction urea + 2 H2O + H(+) = hydrogencarbonate + 2 NH4(+). The protein operates within nitrogen metabolism; urea degradation; CO(2) and NH(3) from urea (urease route): step 1/1. This Kocuria rhizophila (strain ATCC 9341 / DSM 348 / NBRC 103217 / DC2201) protein is Urease subunit gamma.